Consider the following 89-residue polypeptide: Class II hydrophobin 2 (89 aa).

An N-terminal signal peptide occupies residues 1–15; it reads MKLYIAAALLTLGLA. 4 disulfides stabilise this stretch: cysteine 34–cysteine 74, cysteine 45–cysteine 66, cysteine 46–cysteine 58, and cysteine 75–cysteine 86.

It belongs to the cerato-ulmin hydrophobin family. In terms of assembly, homodimer. Homodimers further self-assemble to form highly ordered films at water-air interfaces through intermolecular interactions.

The protein localises to the secreted. The protein resides in the cell wall. In terms of biological role, aerial growth, conidiation, and dispersal of filamentous fungi in the environment rely upon a capability of their secreting small amphipathic proteins called hydrophobins (HPBs) with low sequence identity. Class I can self-assemble into an outermost layer of rodlet bundles on aerial cell surfaces, conferring cellular hydrophobicity that supports fungal growth, development and dispersal; whereas Class II form highly ordered films at water-air interfaces through intermolecular interactions but contribute nothing to the rodlet structure. The chain is Class II hydrophobin 2 from Trichoderma asperellum (strain ATCC 204424 / CBS 433.97 / NBRC 101777).